The sequence spans 374 residues: MKIEELIAIRRDLHRIPELGFQEFKTQQYLLNVLEQYPQDRIEIEKWRTGLFVKVNGTAPEKMLAYRADIDALSIEEQTGLPFASEHHGNMHACGHDLHMTIALGIIDHFVHHPVKHDLLFLFQPAEEGPGGAEPMLESDVLKKWQPDFITALHIAPELPVGTIATKSGLLFANTSELVIDLEGKGGHAAYPHLAEDMVVAASTLVTQLQTIISRNTDPLDSAVITVGTITGGSAQNIIAETAHLEGTIRTLSEESMKQVKERIEDVVKGIEIGFRCKGKVTYPSVYHQVYNTSGLTEEFMSFVAEHQLATVIEAKEAMTGEDFGYMLKKYPGFMFWLGADSEHGLHHAKLNPDENAIETAVHVMTGYFSVYAN.

Residue Asp69 is part of the active site. Glu128 (proton acceptor) is an active-site residue.

This sequence belongs to the peptidase M20A family. N-acetyldiaminopimelate deacetylase subfamily.

It carries out the reaction N-acetyl-(2S,6S)-2,6-diaminopimelate + H2O = (2S,6S)-2,6-diaminopimelate + acetate. The protein operates within amino-acid biosynthesis; L-lysine biosynthesis via DAP pathway; LL-2,6-diaminopimelate from (S)-tetrahydrodipicolinate (acetylase route): step 3/3. Functionally, catalyzes the conversion of N-acetyl-diaminopimelate to diaminopimelate and acetate. The protein is N-acetyldiaminopimelate deacetylase (ykuR) of Bacillus subtilis (strain 168).